Reading from the N-terminus, the 99-residue chain is PLAGFFSKLFVFTACLQSSLYFLTFIGILLSGITAFYYIQIIKIIYFGRLNFWSIYIPIDKSNAVMISITTLLLILFFADNSIFITSNLVSLNIFHFLK.

Transmembrane regions (helical) follow at residues 22–42 and 65–85; these read FLTF…IQII and VMIS…SIFI.

The protein belongs to the complex I subunit 2 family.

Its subcellular location is the mitochondrion inner membrane. The catalysed reaction is a ubiquinone + NADH + 5 H(+)(in) = a ubiquinol + NAD(+) + 4 H(+)(out). Its function is as follows. Core subunit of the mitochondrial membrane respiratory chain NADH dehydrogenase (Complex I) that is believed to belong to the minimal assembly required for catalysis. Complex I functions in the transfer of electrons from NADH to the respiratory chain. The immediate electron acceptor for the enzyme is believed to be ubiquinone. This chain is NADH-ubiquinone oxidoreductase chain 2 (ND2), found in Cyanidium caldarium (Red alga).